We begin with the raw amino-acid sequence, 291 residues long: MQSRPAQESGSASETPARGRPTPSDAPRDEPTNYNNNAESLLEQRLTRLIEKLNAEKHNSNLRNVAFEIGRPSLEPTSAMRRNPANPYGRFSIDELFKMKVGVVSNNMATTEQMAKIASDIAGLGVPTEHVASVILQMVIMCACVSSSAFLDPEGSIEFENGAVPVDSIAAIMKKHAGLRKVCRLYAPIVWNSMLVRNQPPADWQAMGFQYNTRFAAFDTFDYVTNQAAIQPVEGIIRRPTSAEVIAHNAHKQLALDRSNRNERLGSLETEYTGGVQGAEIVRNHRYANNG.

A compositionally biased stretch (polar residues) spans 1-14; it reads MQSRPAQESGSASE. The segment at 1–36 is disordered; sequence MQSRPAQESGSASETPARGRPTPSDAPRDEPTNYNN.

This sequence belongs to the potexviruses coat protein family.

It is found in the virion. Functionally, required for genome encapsidation. Forms ribonucleoprotein complexes along with TGB1 helicase and viral RNA. In Lily symptomless virus (LSV), this protein is Capsid protein.